Here is a 167-residue protein sequence, read N- to C-terminus: Transcription factor 24 (167 aa).

Positions 1–23 (MDRGRPAGSPLSASAEPAPLAAA) are enriched in low complexity. The tract at residues 1–60 (MDRGRPAGSPLSASAEPAPLAAAIRDSRPGRTGPGPAGPGGGSRSGSGRPAAANAARERS) is disordered. The segment covering 32-45 (TGPGPAGPGGGSRS) has biased composition (gly residues). Residues 46–55 (GSGRPAAANA) show a composition bias toward low complexity. The bHLH domain occupies 49-101 (RPAAANAARERSRVQTLRHAFLELQRTLPSVPPDTKLSKLDVLLLATTYIAHL).

Efficient DNA binding requires dimerization with another bHLH protein.

It localises to the nucleus. In terms of biological role, putative transcription factor. The chain is Transcription factor 24 (TCF24) from Homo sapiens (Human).